The following is a 472-amino-acid chain: Collagenase 3 (472 aa).

A signal peptide spans 1-19 (MHPGVLAAFLFLSWTRCWS). Residues 20 to 104 (LPVPNDDDDD…PRCGVPDVGE (85 aa)) constitute a propeptide, activation peptide. A Cysteine switch motif is present at residues 95–102 (PRCGVPDV). Zn(2+) is bound at residue Cys97. The N-linked (GlcNAc...) asparagine glycan is linked to Asn118. Asp129 provides a ligand contact to Ca(2+). Asn153 and Asn159 each carry an N-linked (GlcNAc...) asparagine glycan. A Ca(2+)-binding site is contributed by Asp163. Zn(2+) contacts are provided by His173 and Asp175. Residues 177-247 (YPFDGPSGLL…GALMFPIYTY (71 aa)) form an interaction with TIMP2 region. Ca(2+) contacts are provided by Asp180, Gly181, Ser183, and Leu185. His188 is a binding site for Zn(2+). Ca(2+)-binding residues include Asn195, Gly197, and Asp199. His201 serves as a coordination point for Zn(2+). Residues Asp203, Asp204, and Glu206 each coordinate Ca(2+). Residue His223 participates in Zn(2+) binding. The active site involves Glu224. Zn(2+) contacts are provided by His227, His233, and Met241. The interaction with collagen stretch occupies residues 269-472 (PGDEDPNPKH…VMPTNSLLWC (204 aa)). Hemopexin repeat units lie at residues 282 to 331 (PDKC…WPEL), 332 to 378 (PNRI…GFPK), 380 to 428 (VKKI…FPGI), and 429 to 472 (GDKV…LLWC). Residues Cys285 and Cys472 are joined by a disulfide bond. Ca(2+) contacts are provided by Asp292, Ile294, Asp336, and Ala338. Phosphotyrosine; by PKDCC is present on Tyr367. Residues Ser384, Ala386, Asp433, and Val435 each contribute to the Ca(2+) site.

This sequence belongs to the peptidase M10A family. Ca(2+) serves as cofactor. It depends on Zn(2+) as a cofactor. In terms of processing, the proenzyme is activated by removal of the propeptide; this cleavage can be effected by other matrix metalloproteinases, such as MMP2, MMP3 and MMP14 and may involve several cleavage steps. Cleavage can also be autocatalytic, after partial maturation by another protease or after treatment with 4-aminophenylmercuric acetate (APMA) (in vitro). N-glycosylated. Post-translationally, tyrosine phosphorylated by PKDCC/VLK. In terms of tissue distribution, seems to be specific to breast carcinomas.

The protein resides in the secreted. It localises to the extracellular space. It is found in the extracellular matrix. Plays a role in the degradation of extracellular matrix proteins including fibrillar collagen, fibronectin, TNC and ACAN. Cleaves triple helical collagens, including type I, type II and type III collagen, but has the highest activity with soluble type II collagen. Can also degrade collagen type IV, type XIV and type X. May also function by activating or degrading key regulatory proteins, such as TGFB1 and CCN2. Plays a role in wound healing, tissue remodeling, cartilage degradation, bone development, bone mineralization and ossification. Required for normal embryonic bone development and ossification. Plays a role in the healing of bone fractures via endochondral ossification. Plays a role in wound healing, probably by a mechanism that involves proteolytic activation of TGFB1 and degradation of CCN2. Plays a role in keratinocyte migration during wound healing. May play a role in cell migration and in tumor cell invasion. The protein is Collagenase 3 (MMP13) of Equus caballus (Horse).